Here is a 713-residue protein sequence, read N- to C-terminus: Vacuolar amino acid transporter 4 (713 aa).

Residues 1 to 33 (MVTNNGDGEHLGIRRNGNLRHPSNNMKIPRRAQ) form a disordered region. At 1-242 (MVTNNGDGEH…IDKVPFLTRN (242 aa)) the chain is on the vacuolar side. The segment covering 21 to 33 (HPSNNMKIPRRAQ) has biased composition (polar residues). Residue Ser-88 is modified to Phosphoserine. Positions 99-121 (RSSVSHGNEAIPRVNPTKNSSAS) are disordered. Residues Ser-130 and Ser-165 each carry the phosphoserine modification. The disordered stretch occupies residues 200–233 (KRQEHQLNDSASSDFTSHESDSINQSSPSSNQDI). The span at 221–231 (SINQSSPSSNQ) shows a compositional bias: low complexity. The helical transmembrane segment at 243–263 (FLEFLYVFGHFAGESFEDDFI) threads the bilayer. At 264-301 (PDSSNMMIRGEDERSALLSRPDHMKVLPSAKGTTSTKK) the chain is on the cytoplasmic side. A helical transmembrane segment spans residues 302–322 (VFLILLKSFIGTGVLFLPNAF). Topologically, residues 323–326 (HNGG) are vacuolar. Residues 327 to 347 (LFFSVSMLAFFGIYSYWCYYI) traverse the membrane as a helical segment. Topologically, residues 348-373 (LVQAKSSCGVSSFGDIGLKLYGPWMR) are cytoplasmic. Residues 374–394 (IIILFSLVITQVGFSGAYMIF) form a helical membrane-spanning segment. Topologically, residues 395–410 (TAKNLQAFLDNVFHVG) are vacuolar. Residues 411–431 (VLPLSYLMVFQTIIFIPLSFI) form a helical membrane-spanning segment. Topologically, residues 432 to 438 (RNISKLS) are cytoplasmic. A helical membrane pass occupies residues 439 to 459 (LPSLLANFFIMAGLVIVIIFT). The Vacuolar portion of the chain corresponds to 460–483 (AKRLFFDLMGTPAMGVVYGLNADR). Residues 484–504 (WTLFIGTAIFAFEGIGLIIPV) traverse the membrane as a helical segment. Topologically, residues 505–515 (QDSMRNPEKFP) are cytoplasmic. A helical transmembrane segment spans residues 516-536 (LVLALVILTATILFISIATLG). At 537 to 561 (YLAYGSNVQTVILLNLPQSNIFVNL) the chain is on the vacuolar side. Residues 562–582 (IQLFYSIAIMLSTPLQLFPAI) traverse the membrane as a helical segment. At 583–621 (KIIENKFFPKFTKIYVKHDDLTTRVELRPNSGKLNWKIK) the chain is on the cytoplasmic side. Residues 622 to 642 (WLKNFIRSIIVIIVVSIAYFG) traverse the membrane as a helical segment. The Vacuolar segment spans residues 643–648 (SDNLDK). The helical transmembrane segment at 649 to 669 (FVSVIGSLACIPLVYIYPSML) threads the bilayer. Over 670–692 (HLRGNSLPETKGEFWRFKPMLDT) the chain is Cytoplasmic. The helical transmembrane segment at 693-711 (ILIFFGIASMLYTSYQSIF) threads the bilayer. Residues 712–713 (GV) are Vacuolar-facing.

Belongs to the amino acid/polyamine transporter 2 family.

The protein resides in the vacuole membrane. Involved in amino acid efflux from the vacuole to the cytoplasm. Capable of transporting large neutral amino acids including tyrosine, glutamine, asparagine, isoleucine and leucine. This Saccharomyces cerevisiae (strain ATCC 204508 / S288c) (Baker's yeast) protein is Vacuolar amino acid transporter 4 (AVT4).